A 250-amino-acid chain; its full sequence is Ubiquinone/menaquinone biosynthesis C-methyltransferase UbiE (250 aa).

S-adenosyl-L-methionine contacts are provided by residues serine 73, aspartate 94, and 122 to 123 (NA).

Belongs to the class I-like SAM-binding methyltransferase superfamily. MenG/UbiE family.

The catalysed reaction is a 2-demethylmenaquinol + S-adenosyl-L-methionine = a menaquinol + S-adenosyl-L-homocysteine + H(+). The enzyme catalyses a 2-methoxy-6-(all-trans-polyprenyl)benzene-1,4-diol + S-adenosyl-L-methionine = a 5-methoxy-2-methyl-3-(all-trans-polyprenyl)benzene-1,4-diol + S-adenosyl-L-homocysteine + H(+). It functions in the pathway quinol/quinone metabolism; menaquinone biosynthesis; menaquinol from 1,4-dihydroxy-2-naphthoate: step 2/2. It participates in cofactor biosynthesis; ubiquinone biosynthesis. In terms of biological role, methyltransferase required for the conversion of demethylmenaquinol (DMKH2) to menaquinol (MKH2) and the conversion of 2-polyprenyl-6-methoxy-1,4-benzoquinol (DDMQH2) to 2-polyprenyl-3-methyl-6-methoxy-1,4-benzoquinol (DMQH2). In Legionella pneumophila (strain Paris), this protein is Ubiquinone/menaquinone biosynthesis C-methyltransferase UbiE.